A 682-amino-acid polypeptide reads, in one-letter code: DNA-directed RNA polymerase subunit beta' (682 aa).

Zn(2+)-binding residues include Cys-69, Cys-71, Cys-87, and Cys-90. Mg(2+) contacts are provided by Asp-489, Asp-491, and Asp-493.

The protein belongs to the RNA polymerase beta' chain family. RpoC1 subfamily. In plastids the minimal PEP RNA polymerase catalytic core is composed of four subunits: alpha, beta, beta', and beta''. When a (nuclear-encoded) sigma factor is associated with the core the holoenzyme is formed, which can initiate transcription. The cofactor is Mg(2+). It depends on Zn(2+) as a cofactor.

The protein resides in the plastid. The protein localises to the chloroplast. The catalysed reaction is RNA(n) + a ribonucleoside 5'-triphosphate = RNA(n+1) + diphosphate. Its function is as follows. DNA-dependent RNA polymerase catalyzes the transcription of DNA into RNA using the four ribonucleoside triphosphates as substrates. The protein is DNA-directed RNA polymerase subunit beta' of Brachypodium distachyon (Purple false brome).